Consider the following 389-residue polypeptide: GTPase Obg (389 aa).

Positions 1-159 (MKFVDEAVIK…RELRLELLLL (159 aa)) constitute an Obg domain. In terms of domain architecture, OBG-type G spans 160–333 (ADVGLLGMPN…LAEKLFDFIK (174 aa)). GTP-binding positions include 166–173 (GMPNAGKS), 191–195 (FTTLV), 213–216 (DIPG), 283–286 (NKTD), and 314–316 (SAA). 2 residues coordinate Mg(2+): serine 173 and threonine 193.

The protein belongs to the TRAFAC class OBG-HflX-like GTPase superfamily. OBG GTPase family. As to quaternary structure, monomer. It depends on Mg(2+) as a cofactor.

It is found in the cytoplasm. In terms of biological role, an essential GTPase which binds GTP, GDP and possibly (p)ppGpp with moderate affinity, with high nucleotide exchange rates and a fairly low GTP hydrolysis rate. Plays a role in control of the cell cycle, stress response, ribosome biogenesis and in those bacteria that undergo differentiation, in morphogenesis control. The protein is GTPase Obg of Shewanella amazonensis (strain ATCC BAA-1098 / SB2B).